The following is a 350-amino-acid chain: tRNA pseudouridine synthase D (350 aa).

Catalysis depends on D79, which acts as the Nucleophile. One can recognise a TRUD domain in the interval 154-306 (GAPNYYGPQR…EQERRPIVLY (153 aa)).

Belongs to the pseudouridine synthase TruD family.

The catalysed reaction is uridine(13) in tRNA = pseudouridine(13) in tRNA. Functionally, responsible for synthesis of pseudouridine from uracil-13 in transfer RNAs. This chain is tRNA pseudouridine synthase D, found in Pseudoalteromonas atlantica (strain T6c / ATCC BAA-1087).